A 338-amino-acid polypeptide reads, in one-letter code: Lipoate-protein ligase A (338 aa).

The BPL/LPL catalytic domain occupies 29–216 (PATQRVLFLW…AFFAHYGERV (188 aa)). ATP is bound by residues Arg-71, 76–79 (GAVF), and Lys-134. A (R)-lipoate-binding site is contributed by Lys-134.

Belongs to the LplA family. As to quaternary structure, monomer.

It localises to the cytoplasm. It carries out the reaction L-lysyl-[lipoyl-carrier protein] + (R)-lipoate + ATP = N(6)-[(R)-lipoyl]-L-lysyl-[lipoyl-carrier protein] + AMP + diphosphate + H(+). The protein operates within protein modification; protein lipoylation via exogenous pathway; protein N(6)-(lipoyl)lysine from lipoate: step 1/2. It functions in the pathway protein modification; protein lipoylation via exogenous pathway; protein N(6)-(lipoyl)lysine from lipoate: step 2/2. In terms of biological role, catalyzes both the ATP-dependent activation of exogenously supplied lipoate to lipoyl-AMP and the transfer of the activated lipoyl onto the lipoyl domains of lipoate-dependent enzymes. In Shigella dysenteriae serotype 1 (strain Sd197), this protein is Lipoate-protein ligase A.